A 593-amino-acid polypeptide reads, in one-letter code: UvrABC system protein C (593 aa).

The GIY-YIG domain occupies 14-91 (DKPGCYLMKN…IKEHDPRYNV (78 aa)). The UVR domain maps to 196-231 (EEMKQTLTEKMLQAAENMEFERAKEYRDQIKSIEAV).

This sequence belongs to the UvrC family. In terms of assembly, interacts with UvrB in an incision complex.

The protein localises to the cytoplasm. Its function is as follows. The UvrABC repair system catalyzes the recognition and processing of DNA lesions. UvrC both incises the 5' and 3' sides of the lesion. The N-terminal half is responsible for the 3' incision and the C-terminal half is responsible for the 5' incision. In Brevibacillus brevis (strain 47 / JCM 6285 / NBRC 100599), this protein is UvrABC system protein C.